The sequence spans 502 residues: Probable glycine dehydrogenase (decarboxylating) subunit 2 (502 aa).

Lys-273 is subject to N6-(pyridoxal phosphate)lysine.

It belongs to the GcvP family. C-terminal subunit subfamily. In terms of assembly, the glycine cleavage system is composed of four proteins: P, T, L and H. In this organism, the P 'protein' is a heterodimer of two subunits. Pyridoxal 5'-phosphate serves as cofactor.

The enzyme catalyses N(6)-[(R)-lipoyl]-L-lysyl-[glycine-cleavage complex H protein] + glycine + H(+) = N(6)-[(R)-S(8)-aminomethyldihydrolipoyl]-L-lysyl-[glycine-cleavage complex H protein] + CO2. In terms of biological role, the glycine cleavage system catalyzes the degradation of glycine. The P protein binds the alpha-amino group of glycine through its pyridoxal phosphate cofactor; CO(2) is released and the remaining methylamine moiety is then transferred to the lipoamide cofactor of the H protein. In Thermococcus onnurineus (strain NA1), this protein is Probable glycine dehydrogenase (decarboxylating) subunit 2.